We begin with the raw amino-acid sequence, 73 residues long: UPF0346 protein lp_1865 (73 aa).

The protein belongs to the UPF0346 family.

The chain is UPF0346 protein lp_1865 from Lactiplantibacillus plantarum (strain ATCC BAA-793 / NCIMB 8826 / WCFS1) (Lactobacillus plantarum).